A 69-amino-acid polypeptide reads, in one-letter code: uncharacterized protein (69 aa).

Residues 21 to 42 (MYAANKKSDARRRGKVGKEQWE) are disordered. The stretch at 35–69 (KVGKEQWEKEMEQYNIQKAQFEKELKEKKEKELKK) forms a coiled coil.

This is an uncharacterized protein from Acheta domesticus (House cricket).